The sequence spans 1908 residues: Putative ankyrin repeat protein L484 (1908 aa).

ANK repeat units lie at residues 20-50, 60-97, 101-130, 134-167, and 1370-1399; these read DIMEQFFLTIKTGDIDKIRNFVAQNKNKFNI, PNKTPIHAVLELDDRIADQETKLTIIKYLDKMGAPMDL, DNVWPIHLAAADQDEDIIDYMLKNKVSIDR, SNNTPLHYAVYGKQVPCFDKVKVGSIVPPQDIDK, and DGNTPLHLAISMTNPDIVEILLKHGANPFT. Positions 1539 to 1603 form a coiled coil; the sequence is VQLLNPKLRD…QTNISDLEFK (65 aa).

The protein resides in the virion. The chain is Putative ankyrin repeat protein L484 from Acanthamoeba polyphaga mimivirus (APMV).